Here is a 537-residue protein sequence, read N- to C-terminus: MQKQWWHKATIYQIYPRSFKDTSGNGIGDLKGITSQLDYLQKLGITAIWLSPVYQSPMDDNGYDISDYEAIAEVFGNMDDMDDLLAAANERGIKIIMDLVVNHTSDEHAWFVEARENPNSPERDYYIWRDEPNNLMSIFSGSAWELDEASGQYYLHLFSKKQPDLNWENAHVRQKIYDMMNFWIAKGIGGFRMDVIDLIGKIPDSEITGNGPRLHDYLKEMNQATFGNHDVMTVGETWGATPEIARQYSRPENKELSMVFQFEHVGLQHKPNAPKWDYAEELDVPALKTIFSKWQTELKLGEGWNSLFWNNHDLPRVLSIWGNDSIYREKSAKALAILLHLMRGTPYIYQGEEIGMTNYPFKDLTEVDDIESLNYAKEAMENGVPAARVMSSIRKVGRDNARTPMQWSKDTHAGFSEAQETWLPVNPNYQEINVADALANQDSIFYTYQQLIALRKDQDWLVEADYHLLPTADKVFAYQRQFGEETYVIVVNVSDQEQVFAKDLAGAEVVITNTDVDKVLETKHLQPWDAFCVKLSV.

Aspartate 194 serves as the catalytic Nucleophile. The active-site Proton donor is glutamate 236.

The protein belongs to the glycosyl hydrolase 13 family.

Its subcellular location is the cytoplasm. The enzyme catalyses Hydrolysis of (1-&gt;6)-alpha-D-glucosidic linkages in (1-&gt;6)-alpha-D-glucans and derived oligosaccharides.. Functionally, the physiological substrates may be short isomaltosaccharides. The sequence is that of Glucan 1,6-alpha-glucosidase (dexB) from Streptococcus dysgalactiae subsp. equisimilis (Streptococcus equisimilis).